Consider the following 652-residue polypeptide: Acetyl-coenzyme A synthetase (652 aa).

CoA is bound by residues 191–194, T311, and N335; that span reads RAGR. ATP-binding positions include 387–389, 411–416, D500, and R515; these read GEP and DTWWQT. S523 is a CoA binding site. R526 serves as a coordination point for ATP. Mg(2+) contacts are provided by V537, H539, and I542. Residue R584 participates in CoA binding. N6-acetyllysine is present on K609.

This sequence belongs to the ATP-dependent AMP-binding enzyme family. Mg(2+) serves as cofactor. Acetylated. Deacetylation by the SIR2-homolog deacetylase activates the enzyme.

The catalysed reaction is acetate + ATP + CoA = acetyl-CoA + AMP + diphosphate. Functionally, catalyzes the conversion of acetate into acetyl-CoA (AcCoA), an essential intermediate at the junction of anabolic and catabolic pathways. Acs undergoes a two-step reaction. In the first half reaction, Acs combines acetate with ATP to form acetyl-adenylate (AcAMP) intermediate. In the second half reaction, it can then transfer the acetyl group from AcAMP to the sulfhydryl group of CoA, forming the product AcCoA. Its function is as follows. Enables the cell to use acetate during aerobic growth to generate energy via the TCA cycle, and biosynthetic compounds via the glyoxylate shunt. Acetylates CheY, the response regulator involved in flagellar movement and chemotaxis. The chain is Acetyl-coenzyme A synthetase from Salmonella typhi.